Here is a 251-residue protein sequence, read N- to C-terminus: Small ribosomal subunit protein uS2 (251 aa).

The segment at L232–A251 is disordered. Residues G235–A251 show a composition bias toward acidic residues.

This sequence belongs to the universal ribosomal protein uS2 family.

This Geobacter metallireducens (strain ATCC 53774 / DSM 7210 / GS-15) protein is Small ribosomal subunit protein uS2.